The chain runs to 570 residues: MNIEEVALKYALANAVKYGGKADVKAVMAKIMAEVPELRPRAREVKEVVEAVVARVNAMSLEEQRRLLEEKWPEALEEKRPEQKRPGIEALPDLPKVKGGVVVRFAPNPDFVLHLGSARPAILNYAYRLKYGGRFILRFEDTDPRTKRPLVTEEVNAYEAIREDLRWLGVSWDEEYIQSRRMEVYYDYAKRLLAMGAAYVDLCRPEEWRRLRNEGRACPHRSQSPEENLELWDKMLEGRFREGEAVVRIKTDLSHPDPSVRDWVAFRIIDTSKTPHPLVGDKYIVWPTYNFAVSIDDHLMGVTHVLRAQEHSVNTVKQSYVFKHFGWEQPVTIHFGRLKIEGATLSKSKLKALKVRYDDPTLPTLAGLRARGILPEAIWELILTVGIKPSDSTVALSNLFALNRKKIEPVANRYMYVADPVRLVFEADRELVAKVPYHPSFRERGERVYRLGPGRVEVFVQRQDVKEGAVVRLMELANVEIERVEGGVAYGRLHSLSLEEARKIGAPIIQWVVDPVEVRVVRPWAPGRKVEEVGLGEAVLRGVEVGAYAQFFRYGFVKKIGPDVFIYVHD.

A 'HIGH' region motif is present at residues 107 to 117 (PNPDFVLHLGS).

This sequence belongs to the class-I aminoacyl-tRNA synthetase family. Glutamate--tRNA ligase type 2 subfamily.

It localises to the cytoplasm. It carries out the reaction tRNA(Glu) + L-glutamate + ATP = L-glutamyl-tRNA(Glu) + AMP + diphosphate. Catalyzes the attachment of glutamate to tRNA(Glu) in a two-step reaction: glutamate is first activated by ATP to form Glu-AMP and then transferred to the acceptor end of tRNA(Glu). This chain is Glutamate--tRNA ligase, found in Pyrobaculum calidifontis (strain DSM 21063 / JCM 11548 / VA1).